A 289-amino-acid chain; its full sequence is Ribosomal RNA small subunit methyltransferase I (289 aa).

Belongs to the methyltransferase superfamily. RsmI family.

Its subcellular location is the cytoplasm. It catalyses the reaction cytidine(1402) in 16S rRNA + S-adenosyl-L-methionine = 2'-O-methylcytidine(1402) in 16S rRNA + S-adenosyl-L-homocysteine + H(+). Its function is as follows. Catalyzes the 2'-O-methylation of the ribose of cytidine 1402 (C1402) in 16S rRNA. The polypeptide is Ribosomal RNA small subunit methyltransferase I (Halalkalibacterium halodurans (strain ATCC BAA-125 / DSM 18197 / FERM 7344 / JCM 9153 / C-125) (Bacillus halodurans)).